A 233-amino-acid polypeptide reads, in one-letter code: Ciliary microtubule inner protein 6 (233 aa).

Basic and acidic residues-rich tracts occupy residues M1–D14 and A21–P33. The segment at M1–D45 is disordered. The interval G127–T159 is mn. The tract at residues L192–T233 is disordered. Over residues T195–T233 the composition is skewed to polar residues.

It localises to the cell projection. The protein resides in the cilium. The sequence is that of Ciliary microtubule inner protein 6 (Cimip6) from Mus musculus (Mouse).